The sequence spans 148 residues: Transcriptional regulator MraZ (148 aa).

SpoVT-AbrB domains are found at residues Ala-5–Ala-51 and Ala-80–Ala-123.

This sequence belongs to the MraZ family. As to quaternary structure, forms oligomers.

It localises to the cytoplasm. The protein resides in the nucleoid. The sequence is that of Transcriptional regulator MraZ from Methylobacillus flagellatus (strain ATCC 51484 / DSM 6875 / VKM B-1610 / KT).